The sequence spans 261 residues: Ribosomal RNA small subunit methyltransferase A (261 aa).

Asn11, Leu13, Gly38, Glu59, Asp84, and Ser106 together coordinate S-adenosyl-L-methionine.

Belongs to the class I-like SAM-binding methyltransferase superfamily. rRNA adenine N(6)-methyltransferase family. RsmA subfamily.

Its subcellular location is the cytoplasm. It carries out the reaction adenosine(1518)/adenosine(1519) in 16S rRNA + 4 S-adenosyl-L-methionine = N(6)-dimethyladenosine(1518)/N(6)-dimethyladenosine(1519) in 16S rRNA + 4 S-adenosyl-L-homocysteine + 4 H(+). Specifically dimethylates two adjacent adenosines (A1518 and A1519) in the loop of a conserved hairpin near the 3'-end of 16S rRNA in the 30S particle. May play a critical role in biogenesis of 30S subunits. This chain is Ribosomal RNA small subunit methyltransferase A, found in Wigglesworthia glossinidia brevipalpis.